Here is a 340-residue protein sequence, read N- to C-terminus: Hydroxyurea phosphotransferase (340 aa).

D240 serves as the catalytic Proton acceptor.

Belongs to the aminoglycoside phosphotransferase family.

Functionally, potential phosphotransferase that inactivates hydroxyurea by phosphorylation of the hydroxy group in the hydroxylamine moiety. The polypeptide is Hydroxyurea phosphotransferase (hur) (Kitasatospora aureofaciens (Streptomyces aureofaciens)).